The following is a 150-amino-acid chain: C-C motif chemokine 25 (150 aa).

An N-terminal signal peptide occupies residues 1–23 (MNLWLLACLVAGFLGAWAPAVHT). Cystine bridges form between C30–C58 and C31–C75.

It belongs to the intercrine beta (chemokine CC) family. Specifically expressed by thymic dendritic cells. High levels in thymus and small intestine.

The protein localises to the secreted. Functionally, potentially involved in T-cell development. Recombinant protein shows chemotactic activity on thymocytes, macrophages, THP-1 cells, and dendritics cells but is inactive on peripheral blood lymphocytes and neutrophils. Binds to CCR9. Isoform 2 is an antagonist of isoform 1. Binds to atypical chemokine receptor ACKR4 and mediates the recruitment of beta-arrestin (ARRB1/2) to ACKR4. The polypeptide is C-C motif chemokine 25 (CCL25) (Homo sapiens (Human)).